A 467-amino-acid chain; its full sequence is Putative sulfoquinovose importer (467 aa).

12 helical membrane-spanning segments follow: residues I17–L37, I54–L74, P88–T108, A121–I141, G160–F180, V185–C205, L238–I258, W275–V295, V303–S323, S325–L345, I379–P399, and L414–Y434.

It belongs to the sodium:galactoside symporter (TC 2.A.2) family.

Its subcellular location is the cell inner membrane. Functionally, could be involved in sulfoquinovose import. This Escherichia coli (strain K12) protein is Putative sulfoquinovose importer (yihO).